The sequence spans 627 residues: UvrABC system protein C (627 aa).

The region spanning 22 to 100 (NNPGVYRMFN…IKRLRPRFNV (79 aa)) is the GIY-YIG domain. The UVR domain maps to 210 to 245 (QSVKDHLAAAMQAASADLDFEHAAVYRDRLAALSHV).

The protein belongs to the UvrC family. As to quaternary structure, interacts with UvrB in an incision complex.

It localises to the cytoplasm. In terms of biological role, the UvrABC repair system catalyzes the recognition and processing of DNA lesions. UvrC both incises the 5' and 3' sides of the lesion. The N-terminal half is responsible for the 3' incision and the C-terminal half is responsible for the 5' incision. The polypeptide is UvrABC system protein C (Brucella abortus biovar 1 (strain 9-941)).